A 561-amino-acid polypeptide reads, in one-letter code: Methionine--tRNA ligase (561 aa).

Residues 11–21 (PYVNTVPHLGN) carry the 'HIGH' region motif. Zn(2+) contacts are provided by C143, C146, C156, and C159. ATP is bound at residue K334.

It belongs to the class-I aminoacyl-tRNA synthetase family. MetG type 1 subfamily. Zn(2+) serves as cofactor.

The protein resides in the cytoplasm. It carries out the reaction tRNA(Met) + L-methionine + ATP = L-methionyl-tRNA(Met) + AMP + diphosphate. Its function is as follows. Is required not only for elongation of protein synthesis but also for the initiation of all mRNA translation through initiator tRNA(fMet) aminoacylation. The protein is Methionine--tRNA ligase of Ignicoccus hospitalis (strain KIN4/I / DSM 18386 / JCM 14125).